The following is an 85-amino-acid chain: Probable small nuclear ribonucleoprotein G (85 aa).

A Sm domain is found at 6–78 (QADPDLTKLL…ILLMEPLESM (73 aa)).

This sequence belongs to the snRNP Sm proteins family. In terms of assembly, core component of the spliceosomal U1, U2, U4 and U5 small nuclear ribonucleoproteins (snRNPs), the building blocks of the spliceosome. Most spliceosomal snRNPs contain a common set of Sm proteins, SNRPB, SNRPD1, SNRPD2, SNRPD3, SNRPE, SNRPF and SNRPG that assemble in a heptameric protein ring on the Sm site of the small nuclear RNA to form the core snRNP. Component of the U1 snRNP. Component of the U4/U6-U5 tri-snRNP complex. Component of the U7 snRNP complex. Component of the U11/U12 snRNPs that are part of the U12-type spliceosome.

The protein resides in the cytoplasm. It is found in the cytosol. It localises to the nucleus. Plays a role in pre-mRNA splicing as a core component of the spliceosomal U1, U2, U4 and U5 small nuclear ribonucleoproteins (snRNPs), the building blocks of the spliceosome. Component of both the pre-catalytic spliceosome B complex and activated spliceosome C complexes. Is also a component of the minor U12 spliceosome. The chain is Probable small nuclear ribonucleoprotein G (snrpG) from Dictyostelium discoideum (Social amoeba).